The following is a 234-amino-acid chain: Large ribosomal subunit protein uL1 (234 aa).

It belongs to the universal ribosomal protein uL1 family. In terms of assembly, part of the 50S ribosomal subunit.

Binds directly to 23S rRNA. The L1 stalk is quite mobile in the ribosome, and is involved in E site tRNA release. Functionally, protein L1 is also a translational repressor protein, it controls the translation of the L11 operon by binding to its mRNA. In Corynebacterium aurimucosum (strain ATCC 700975 / DSM 44827 / CIP 107346 / CN-1) (Corynebacterium nigricans), this protein is Large ribosomal subunit protein uL1.